Consider the following 2006-residue polypeptide: E3 ubiquitin-protein ligase PRT6 (2006 aa).

Residues 119-189 (GVCGSVWGQN…PDGFCSNHKG (71 aa)) form a UBR-type zinc finger. Disordered stretches follow at residues 1167 to 1186 (LSSS…SDSV) and 1338 to 1380 (DHQP…AGSD). Positions 1338–1348 (DHQPHEAENCS) are enriched in basic and acidic residues. The segment covering 1349–1360 (EKNSVGGPSTLQ) has biased composition (polar residues). Positions 1364-1377 (PDIRSRQTSRRPDA) are enriched in basic and acidic residues. The RING-type; degenerate zinc finger occupies 1395–1440 (CGHAVHQSCLERYLKSLKERSGRRTVFEGAHIVDLKKKEFLCPVCR).

Belongs to the E3 ubiquitin-protein ligase UBR1-like family.

It catalyses the reaction S-ubiquitinyl-[E2 ubiquitin-conjugating enzyme]-L-cysteine + [acceptor protein]-L-lysine = [E2 ubiquitin-conjugating enzyme]-L-cysteine + N(6)-ubiquitinyl-[acceptor protein]-L-lysine.. The protein operates within protein modification; protein ubiquitination. Its function is as follows. Ubiquitin protein ligase which is a component of the N-end rule pathway with arginine specificity, and functions with the arginyltransferases ATE1 and ATE2. Recognizes and binds to proteins bearing specific N-terminal residues that are destabilizing according to the N-end rule, leading to their ubiquitination and subsequent degradation. Does not participate in degradation of proteins with N-terminal Phe or Leu. The N-end rule pathway regulates seed after-ripening, seedling sugar sensitivity, seedling lipid breakdown, and abscisic acid (ABA) sensitivity of germination. The N-end rule pathway regulates various aspects of leaf and shoot development. Involved in the ubiquitination and subsequent degradation of RAP2-12, an activator of hypoxic gene expression. The ubiquitination occurs after the N-arginylation of RAP2-12 by ATE1 or ATE2 under aerobic conditions. The end-rule pathway plays a role in regulating the timing and amplitude of the immune response following infection with the bacterial pathogen Pseudomonas syringae pv tomato. Regulates the biosynthesis of plant-defense metabolites such as glucosinolates, and the biosynthesis and response to the phytohormone jasmonate (JA), which plays a key role in plant immunity. Controls the expression of specific defense-response genes, activates the synthesis pathway for the phytoalexin camalexin, and influences basal resistance to the hemibiotroph pathogen Pseudomonas syringae pv tomato. Coordinates the mobilization of seed storage reserves and regulates the abundance and activities of several proteases following seed germination. This Arabidopsis thaliana (Mouse-ear cress) protein is E3 ubiquitin-protein ligase PRT6.